The sequence spans 174 residues: Nucleoside-triphosphatase THEP1 (174 aa).

ATP is bound by residues 7-14 (GRPGSGKS) and 98-105 (CIIIDEIG).

The protein belongs to the THEP1 NTPase family.

It carries out the reaction a ribonucleoside 5'-triphosphate + H2O = a ribonucleoside 5'-diphosphate + phosphate + H(+). Has nucleotide phosphatase activity towards ATP, GTP, CTP, TTP and UTP. May hydrolyze nucleoside diphosphates with lower efficiency. This is Nucleoside-triphosphatase THEP1 from Methanothermobacter thermautotrophicus (strain ATCC 29096 / DSM 1053 / JCM 10044 / NBRC 100330 / Delta H) (Methanobacterium thermoautotrophicum).